Reading from the N-terminus, the 181-residue chain is Inner membrane-spanning protein YciB (181 aa).

A run of 5 helical transmembrane segments spans residues 19-39, 50-70, 80-100, 118-138, and 148-168; these read FFDIYAATGALIVATLIQLIA, MHLITFALVASFGTATLIFHD, IVYALFAIALIAGQFLGKPIL, LTWYWVLFFVACGLINIYVAF, and FKVFGLTAATLVNTLLTVVYL.

The protein belongs to the YciB family.

Its subcellular location is the cell inner membrane. In terms of biological role, plays a role in cell envelope biogenesis, maintenance of cell envelope integrity and membrane homeostasis. The chain is Inner membrane-spanning protein YciB from Shewanella amazonensis (strain ATCC BAA-1098 / SB2B).